The sequence spans 397 residues: Elongation factor Tu (397 aa).

In terms of domain architecture, tr-type G spans 10–207 (KPHVNIGTIG…VLDEYVKEPV (198 aa)). The segment at 19–26 (GHIDHGKT) is G1. 19 to 26 (GHIDHGKT) is a GTP binding site. Thr26 contacts Mg(2+). A G2 region spans residues 60 to 64 (GITIS). Positions 81–84 (DCPG) are G3. Residues 81–85 (DCPGH) and 136–139 (NKCD) contribute to the GTP site. Positions 136-139 (NKCD) are G4. The G5 stretch occupies residues 174–176 (SAL).

Belongs to the TRAFAC class translation factor GTPase superfamily. Classic translation factor GTPase family. EF-Tu/EF-1A subfamily. Monomer.

It is found in the cytoplasm. The enzyme catalyses GTP + H2O = GDP + phosphate + H(+). Its function is as follows. GTP hydrolase that promotes the GTP-dependent binding of aminoacyl-tRNA to the A-site of ribosomes during protein biosynthesis. The sequence is that of Elongation factor Tu from Desulforapulum autotrophicum (strain ATCC 43914 / DSM 3382 / VKM B-1955 / HRM2) (Desulfobacterium autotrophicum).